The primary structure comprises 392 residues: Protein O-glucosyltransferase 1 (392 aa).

A signal peptide spans 1–23 (MERRAGSRLRAWMLLLLLCPVQG). Cystine bridges form between Cys-49–Cys-56, Cys-54–Cys-357, Cys-102–Cys-108, and Cys-263–Cys-286. Asn-53 carries an N-linked (GlcNAc...) asparagine glycan. The interval 103–107 (MFPSR) is interaction with the consensus sequence C-X-S-X-[PA]-C in peptide substrates. The active-site Proton donor/acceptor is the Asp-133. The interaction with the consensus sequence C-X-S-X-[PA]-C in peptide substrates stretch occupies residues 172-178 (AVWPLYP). Residue Tyr-177 coordinates UDP-alpha-D-glucose. Asn-204 carries an N-linked (GlcNAc...) asparagine glycan. UDP-alpha-D-glucose is bound by residues Ser-212, Arg-218, and 274 to 279 (VAASFR). Asn-373 is a glycosylation site (N-linked (GlcNAc...) asparagine). The short motif at 389 to 392 (KTEL) is the Prevents secretion from ER element.

Belongs to the glycosyltransferase 90 family. Widely expressed in newborn and adult tissues (at protein level).

Its subcellular location is the endoplasmic reticulum lumen. It carries out the reaction L-seryl-[EGF-like domain protein] + UDP-alpha-D-xylose = 3-O-(beta-D-xylosyl)-L-seryl-[EGF-like domain protein] + UDP + H(+). The catalysed reaction is L-seryl-[EGF-like domain protein] + UDP-alpha-D-glucose = 3-O-(beta-D-glucosyl)-L-seryl-[EGF-like domain protein] + UDP + H(+). It functions in the pathway protein modification; protein glycosylation. Its function is as follows. Dual specificity glycosyltransferase that catalyzes the transfer of glucose and xylose from UDP-glucose and UDP-xylose, respectively, to a serine residue found in the consensus sequence of C-X-S-X-P-C. Specifically targets extracellular EGF repeats of protein such as CRB2, F7, F9 and NOTCH2. Acts as a positive regulator of Notch signaling by mediating O-glucosylation of Notch, leading to regulate muscle development. Notch glucosylation does not affect Notch ligand binding. Required during early development to promote gastrulation: acts by mediating O-glucosylation of CRB2, which is required for CRB2 localization to the cell membrane. In Mus musculus (Mouse), this protein is Protein O-glucosyltransferase 1.